The following is a 484-amino-acid chain: 6-phosphogluconate dehydrogenase, decarboxylating (484 aa).

NADP(+) contacts are provided by residues 11–16, 34–36, 76–78, and Asn-104; these read GLAVMG, NRT, and VRA. Substrate is bound by residues Asn-104 and 130–132; that span reads SGG. Lys-185 acts as the Proton acceptor in catalysis. 188–189 serves as a coordination point for substrate; that stretch reads HN. The Proton donor role is filled by Glu-192. Positions 193, 262, 289, 447, and 453 each coordinate substrate.

Belongs to the 6-phosphogluconate dehydrogenase family. As to quaternary structure, homodimer.

The catalysed reaction is 6-phospho-D-gluconate + NADP(+) = D-ribulose 5-phosphate + CO2 + NADPH. It functions in the pathway carbohydrate degradation; pentose phosphate pathway; D-ribulose 5-phosphate from D-glucose 6-phosphate (oxidative stage): step 3/3. In terms of biological role, catalyzes the oxidative decarboxylation of 6-phosphogluconate to ribulose 5-phosphate and CO(2), with concomitant reduction of NADP to NADPH. This is 6-phosphogluconate dehydrogenase, decarboxylating (gnd) from Haemophilus influenzae (strain ATCC 51907 / DSM 11121 / KW20 / Rd).